Consider the following 478-residue polypeptide: Protein nucleotidyltransferase YdiU (478 aa).

ATP is bound by residues Gly84, Gly86, Arg87, Lys107, Asp119, Gly120, Arg170, and Arg177. Asp246 acts as the Proton acceptor in catalysis. Residues Asn247 and Asp256 each contribute to the Mg(2+) site. Asp256 is a binding site for ATP.

The protein belongs to the SELO family. Mg(2+) is required as a cofactor. Requires Mn(2+) as cofactor.

The catalysed reaction is L-seryl-[protein] + ATP = 3-O-(5'-adenylyl)-L-seryl-[protein] + diphosphate. It catalyses the reaction L-threonyl-[protein] + ATP = 3-O-(5'-adenylyl)-L-threonyl-[protein] + diphosphate. The enzyme catalyses L-tyrosyl-[protein] + ATP = O-(5'-adenylyl)-L-tyrosyl-[protein] + diphosphate. It carries out the reaction L-histidyl-[protein] + UTP = N(tele)-(5'-uridylyl)-L-histidyl-[protein] + diphosphate. The catalysed reaction is L-seryl-[protein] + UTP = O-(5'-uridylyl)-L-seryl-[protein] + diphosphate. It catalyses the reaction L-tyrosyl-[protein] + UTP = O-(5'-uridylyl)-L-tyrosyl-[protein] + diphosphate. Functionally, nucleotidyltransferase involved in the post-translational modification of proteins. It can catalyze the addition of adenosine monophosphate (AMP) or uridine monophosphate (UMP) to a protein, resulting in modifications known as AMPylation and UMPylation. This Escherichia coli O7:K1 (strain IAI39 / ExPEC) protein is Protein nucleotidyltransferase YdiU.